The following is an 88-amino-acid chain: Small ribosomal subunit protein uS17 (88 aa).

This sequence belongs to the universal ribosomal protein uS17 family. As to quaternary structure, part of the 30S ribosomal subunit.

Functionally, one of the primary rRNA binding proteins, it binds specifically to the 5'-end of 16S ribosomal RNA. This Prochlorococcus marinus (strain MIT 9215) protein is Small ribosomal subunit protein uS17.